Reading from the N-terminus, the 339-residue chain is Scoulerine-9-O-methyltransferase 3 (339 aa).

M161 provides a ligand contact to S-adenosyl-L-methionine. Substrate is bound at residue D164. Residues T165, G191, D214, 228–229 (DV), and K242 each bind S-adenosyl-L-methionine. Position 243-247 (243-247 (SILHE)) interacts with substrate. H246 serves as the catalytic Proton acceptor.

Belongs to the class I-like SAM-binding methyltransferase superfamily. Cation-independent O-methyltransferase family. COMT subfamily. As to quaternary structure, homodimer. Forms heterodimer with SOMT2. The heterodimer SOMT2-SOMT3 possesses 3-O-acetyl-4'-O-demethylpapaveroxine 4'-O-methyltransferase activity, where SOMT2 is the catalytic subunit. In terms of tissue distribution, highly expressed in capsules. Expressed is stems. Expressed at low levels in roots.

The catalysed reaction is (S)-scoulerine + S-adenosyl-L-methionine = (S)-tetrahydrocolumbamine + S-adenosyl-L-homocysteine + H(+). It functions in the pathway alkaloid biosynthesis. Its function is as follows. Methyltransferase involved in the biosynthesis of the benzylisoquinoline alkaloid noscapine. Catalyzes the conversion of (S)-scoulerine to (S)-tetrahydrocolumbamine. This chain is Scoulerine-9-O-methyltransferase 3, found in Papaver somniferum (Opium poppy).